A 108-amino-acid chain; its full sequence is uncharacterized protein (108 aa).

This sequence belongs to the baculoviridae 11 kDa protein family.

This is an uncharacterized protein from Orgyia pseudotsugata (Douglas-fir tussock moth).